A 351-amino-acid chain; its full sequence is Cyanuric acid amidohydrolase (351 aa).

The segment at Met1–Val96 is RU A. Residues Arg53 and Ser77–Gly78 contribute to the substrate site. An RU B region spans residues Ala103–Ala240. The active site involves Lys153. Residues Arg185 and Ser223–Ser224 contribute to the substrate site. Ser223 functions as the Nucleophile in the catalytic mechanism. The interval Leu246 to Gln351 is RU C. Glu283 provides a ligand contact to Mg(2+). Substrate contacts are provided by residues Arg310 and Ser329 to Gly330. Ala332, Gln335, Gly336, Pro337, and Gly340 together coordinate Mg(2+).

The protein belongs to the cyclic amide hydrolase (CyAH) family. In terms of assembly, homotetramer.

The catalysed reaction is cyanurate + H2O = 1-carboxybiuret + H(+). It participates in xenobiotic degradation; atrazine degradation; biuret from cyanurate: step 1/1. Its activity is regulated as follows. Inhibited by barbituric acid. Responsible for the hydrolysis of cyanuric acid, an intermediate formed during catabolism of s-triazine based compounds in herbicides such as atrazine and polymers such as melamine. Catalyzes the hydrolytic opening of the s-triazine ring of cyanuric acid (2,4,6-trihydroxy-s-triazine) to yield carbon dioxide and carboxybiuret, which spontaneously decarboxylates to biuret. The chain is Cyanuric acid amidohydrolase from Rhizobium johnstonii (strain DSM 114642 / LMG 32736 / 3841) (Rhizobium leguminosarum bv. viciae).